Here is a 184-residue protein sequence, read N- to C-terminus: GTP cyclohydrolase 1 (184 aa).

Cys-75, His-78, and Cys-146 together coordinate Zn(2+).

The protein belongs to the GTP cyclohydrolase I family. As to quaternary structure, toroid-shaped homodecamer, composed of two pentamers of five dimers.

The catalysed reaction is GTP + H2O = 7,8-dihydroneopterin 3'-triphosphate + formate + H(+). It functions in the pathway cofactor biosynthesis; 7,8-dihydroneopterin triphosphate biosynthesis; 7,8-dihydroneopterin triphosphate from GTP: step 1/1. This chain is GTP cyclohydrolase 1, found in Streptococcus pneumoniae serotype 2 (strain D39 / NCTC 7466).